The following is a 227-amino-acid chain: Flagellar L-ring protein (227 aa).

An N-terminal signal peptide occupies residues 1–16; the sequence is MRNIILFAAGTLLLSG. Residue C17 is the site of N-palmitoyl cysteine attachment. A lipid anchor (S-diacylglycerol cysteine) is attached at C17.

The protein belongs to the FlgH family. As to quaternary structure, the basal body constitutes a major portion of the flagellar organelle and consists of four rings (L,P,S, and M) mounted on a central rod.

Its subcellular location is the cell outer membrane. The protein resides in the bacterial flagellum basal body. Its function is as follows. Assembles around the rod to form the L-ring and probably protects the motor/basal body from shearing forces during rotation. The polypeptide is Flagellar L-ring protein (Pseudoalteromonas translucida (strain TAC 125)).